The following is a 686-amino-acid chain: Soluble guanylate cyclase gcy-34 (686 aa).

H105 serves as a coordination point for heme. 2 coiled-coil regions span residues 306 to 335 and 398 to 432; these read KKHMNAMTKEEREQEVEAMEEEVESNELTQ and VEVNLQLEANNEQLETMTHELEVERQKTDSILKDM. Positions 455–583 constitute a Guanylate cyclase domain; that stretch reads TVMFCDLPAF…ETVTLASQME (129 aa). Mg(2+)-binding residues include D460 and D504.

It belongs to the adenylyl cyclase class-4/guanylyl cyclase family. As to quaternary structure, heterodimer; with other soluble guanylate cyclases. It depends on heme as a cofactor. Expressed in a small number of neurons, corresponding to URX, AQR and PQR neurons.

It is found in the cytoplasm. The catalysed reaction is GTP = 3',5'-cyclic GMP + diphosphate. May be regulated by molecular oxygen. Probably not activated by nitric oxide (NO). Synthesizes cyclic GMP (cGMP) from GTP. May be involved in sensitivity to quinine by regulating egl-4 activity through the production of cGMP. In Caenorhabditis elegans, this protein is Soluble guanylate cyclase gcy-34 (gcy-34).